We begin with the raw amino-acid sequence, 338 residues long: Ketol-acid reductoisomerase (NADP(+)) (338 aa).

The KARI N-terminal Rossmann domain maps to 1–181 (MNVFYDKDAD…GGGRAGIIET (181 aa)). NADP(+) contacts are provided by residues 24–27 (YGSQ), Arg47, and Ser52. His107 is a catalytic residue. Gly133 lines the NADP(+) pocket. One can recognise a KARI C-terminal knotted domain in the interval 182–327 (NFREETETDL…AKLRAMMPWI (146 aa)). Asp190, Glu194, Glu226, and Glu230 together coordinate Mg(2+). Ser251 provides a ligand contact to substrate.

This sequence belongs to the ketol-acid reductoisomerase family. It depends on Mg(2+) as a cofactor.

The catalysed reaction is (2R)-2,3-dihydroxy-3-methylbutanoate + NADP(+) = (2S)-2-acetolactate + NADPH + H(+). It catalyses the reaction (2R,3R)-2,3-dihydroxy-3-methylpentanoate + NADP(+) = (S)-2-ethyl-2-hydroxy-3-oxobutanoate + NADPH + H(+). It functions in the pathway amino-acid biosynthesis; L-isoleucine biosynthesis; L-isoleucine from 2-oxobutanoate: step 2/4. It participates in amino-acid biosynthesis; L-valine biosynthesis; L-valine from pyruvate: step 2/4. Functionally, involved in the biosynthesis of branched-chain amino acids (BCAA). Catalyzes an alkyl-migration followed by a ketol-acid reduction of (S)-2-acetolactate (S2AL) to yield (R)-2,3-dihydroxy-isovalerate. In the isomerase reaction, S2AL is rearranged via a Mg-dependent methyl migration to produce 3-hydroxy-3-methyl-2-ketobutyrate (HMKB). In the reductase reaction, this 2-ketoacid undergoes a metal-dependent reduction by NADPH to yield (R)-2,3-dihydroxy-isovalerate. This chain is Ketol-acid reductoisomerase (NADP(+)), found in Burkholderia lata (strain ATCC 17760 / DSM 23089 / LMG 22485 / NCIMB 9086 / R18194 / 383).